Reading from the N-terminus, the 573-residue chain is Proton-coupled zinc antiporter SLC30A9, mitochondrial (573 aa).

A disordered region spans residues Asn-66 to Thr-108. Residues Ala-90–Pro-104 are compositionally biased toward low complexity. The next 5 helical transmembrane spans lie at Val-244–Val-264, Gly-319–Leu-339, Leu-347–Val-367, Val-397–Gly-417, and Ser-429–Thr-449. Positions Leu-467–Leu-471 match the LXXLL motif motif.

Belongs to the cation diffusion facilitator (CDF) transporter (TC 2.A.4) family. SLC30A subfamily.

It localises to the mitochondrion membrane. The protein localises to the nucleus. It is found in the endoplasmic reticulum. The enzyme catalyses Zn(2+)(in) + 2 H(+)(out) = Zn(2+)(out) + 2 H(+)(in). In terms of biological role, mitochondrial proton-coupled zinc ion antiporter mediating the export of zinc from the mitochondria and involved in zinc homeostasis, zinc mobilization as well as mitochondrial morphology and health. In nucleus, may function as a secondary coactivator for nuclear receptors. This chain is Proton-coupled zinc antiporter SLC30A9, mitochondrial (slc30a9), found in Danio rerio (Zebrafish).